The chain runs to 246 residues: Flagellar L-ring protein (246 aa).

Positions 1–20 (MMQKCLSPKTLIAALVVLSA) are cleaved as a signal peptide. Residue C21 is the site of N-palmitoyl cysteine attachment. A lipid anchor (S-diacylglycerol cysteine) is attached at C21.

The protein belongs to the FlgH family. As to quaternary structure, the basal body constitutes a major portion of the flagellar organelle and consists of four rings (L,P,S, and M) mounted on a central rod.

The protein localises to the cell outer membrane. Its subcellular location is the bacterial flagellum basal body. In terms of biological role, assembles around the rod to form the L-ring and probably protects the motor/basal body from shearing forces during rotation. In Ruegeria pomeroyi (strain ATCC 700808 / DSM 15171 / DSS-3) (Silicibacter pomeroyi), this protein is Flagellar L-ring protein.